The sequence spans 508 residues: Photosystem II CP47 reaction center protein (508 aa).

6 helical membrane-spanning segments follow: residues 21-36, 101-115, 140-156, 203-218, 237-252, and 457-472; these read SVHIMHTALVSGWAGS, IVFSGLCFLAAIWHW, GIHLFLSGVTCFGFGAF, IAAGTLGILAGLFHLS, VLSSSIAAVFFAAFVV, and TFALLFFFGHIWHGAR.

This sequence belongs to the PsbB/PsbC family. PsbB subfamily. In terms of assembly, PSII is composed of 1 copy each of membrane proteins PsbA, PsbB, PsbC, PsbD, PsbE, PsbF, PsbH, PsbI, PsbJ, PsbK, PsbL, PsbM, PsbT, PsbX, PsbY, PsbZ, Psb30/Ycf12, at least 3 peripheral proteins of the oxygen-evolving complex and a large number of cofactors. It forms dimeric complexes. The cofactor is Binds multiple chlorophylls. PSII binds additional chlorophylls, carotenoids and specific lipids..

Its subcellular location is the plastid. The protein resides in the chloroplast thylakoid membrane. In terms of biological role, one of the components of the core complex of photosystem II (PSII). It binds chlorophyll and helps catalyze the primary light-induced photochemical processes of PSII. PSII is a light-driven water:plastoquinone oxidoreductase, using light energy to abstract electrons from H(2)O, generating O(2) and a proton gradient subsequently used for ATP formation. This Drimys granadensis protein is Photosystem II CP47 reaction center protein.